The chain runs to 1365 residues: Histone-lysine N-methyltransferase NSD2 (1365 aa).

2 positions are modified to phosphothreonine: Thr-110 and Thr-114. Residue Ser-121 is modified to Phosphoserine. The segment at 149 to 170 (ADVSQSEENGQKPENKARRNRK) is disordered. At Ser-172 the chain carries Phosphoserine. In terms of domain architecture, PWWP 1 spans 222–286 (VGDLVWSKVS…FEKSLVAFEG (65 aa)). At Ser-376 the chain carries Phosphoserine. Disordered regions lie at residues 376–455 (SSGV…RKGD) and 516–658 (EDSG…SKKS). Thr-422 bears the Phosphothreonine mark. Positions 453–521 (KGDAASQFLV…VQAEEDSGNV (69 aa)) form a DNA-binding region, HMG box. Position 544 is a phosphothreonine (Thr-544). Residues 552–567 (DKHSLRKRDTITDKTA) show a composition bias toward basic and acidic residues. Polar residues predominate over residues 580–590 (SLKSQAATKNL). The span at 606 to 622 (AASSALGFSKSSSPSAS) shows a compositional bias: low complexity. Position 614 is a phosphoserine (Ser-614). A compositionally biased stretch (acidic residues) spans 632 to 648 (PGDEPSESPYESADETQ). 3 consecutive PHD-type zinc fingers follow at residues 667 to 713 (EYVC…CASG), 714 to 770 (IHSC…CHAS), and 831 to 875 (VSWC…CRAG). Residues 880–942 (FQDIIWVKLG…QARVFPYMEG (63 aa)) form the PWWP 2 domain. The AWS domain occupies 1011-1061 (SEIPKCNCKPTDENPCGFDSECLNRMLMFECHPQVCPAGEFCQNQCFTKRQ). Residues Cys-1016, Cys-1018, Cys-1026, Cys-1032, Cys-1041, Cys-1046, and Cys-1052 each coordinate Zn(2+). One can recognise an SET domain in the interval 1063–1180 (PETKIIKTDG…AGTELTFNYN (118 aa)). S-adenosyl-L-methionine contacts are provided by residues Trp-1075, 1115-1118 (THFY), and 1141-1142 (NH). Cys-1144 contributes to the Zn(2+) binding site. Position 1186 (Asn-1186) interacts with S-adenosyl-L-methionine. The Post-SET domain occupies 1187–1203 (EKTVCRCGASNCSGFLG). Cys-1191 serves as a coordination point for Zn(2+). Arg-1192 lines the S-adenosyl-L-methionine pocket. The Zn(2+) site is built by Cys-1193 and Cys-1198. Positions 1207 to 1232 (KTSTTLSSEEKGKKTKKKTRRRRAKG) are disordered. Basic residues predominate over residues 1219-1230 (KKTKKKTRRRRA). The segment at 1239–1286 (EDECFRCGDGGQLVLCDRKFCTKAYHLSCLGLGKRPFGKWECPWHHCD) adopts a PHD-type 4; atypical zinc-finger fold. The disordered stretch occupies residues 1333–1365 (VRSTKTEKPPPEPGKPKGKRRRRRGWRRVTEGK). A compositionally biased stretch (basic residues) spans 1348-1359 (PKGKRRRRRGWR).

The protein belongs to the class V-like SAM-binding methyltransferase superfamily. Histone-lysine methyltransferase family. SET2 subfamily. In terms of assembly, interacts with HDAC1. Interacts (via PHD-type zinc fingers 1, 2 and 3) with SALL1. Interacts (via PHD-type 1, 2 and 3) with SALL4. Interacts with NANOG. Interacts with OGT. Interacts (via HMG box) with NKX2-5. Widely expressed. Predominantly expressed in thymus and testis.

It localises to the nucleus. It is found in the chromosome. Its subcellular location is the cytoplasm. The protein localises to the nucleolus. The enzyme catalyses L-lysyl(36)-[histone H3] + S-adenosyl-L-methionine = N(6)-methyl-L-lysyl(36)-[histone H3] + S-adenosyl-L-homocysteine + H(+). The catalysed reaction is L-lysyl(36)-[histone H3] + 2 S-adenosyl-L-methionine = N(6),N(6)-dimethyl-L-lysyl(36)-[histone H3] + 2 S-adenosyl-L-homocysteine + 2 H(+). Functionally, histone methyltransferase which specifically dimethylates nucleosomal histone H3 at 'Lys-36' (H3K36me2). Also monomethylates nucleosomal histone H3 at 'Lys-36' (H3K36me) in vitro. Does not trimethylate nucleosomal histone H3 at 'Lys-36' (H3K36me3). However, specifically trimethylates histone H3 at 'Lys-36' (H3K36me3) at euchromatic regions in embryonic stem (ES) cells. By methylating histone H3 at 'Lys-36', involved in the regulation of gene transcription during various biological processes. In ES cells, associates with developmental transcription factors such as SALL1 and represses inappropriate gene transcription mediated by histone deacetylation. During heart development, associates with transcription factor NKX2-5 to repress transcription of NKX2-5 target genes. Plays an essential role in adipogenesis, by regulating expression of genes involved in pre-adipocyte differentiation. During T-cell receptor (TCR) and CD28-mediated T-cell activation, promotes the transcription of transcription factor BCL6 which is required for follicular helper T (Tfh) cell differentiation. During B-cell development, required for the generation of the B1 lineage. During B2 cell activation, may contribute to the control of isotype class switch recombination (CRS), splenic germinal center formation, and the humoral immune response. Plays a role in class switch recombination of the immunoglobulin heavy chain (IgH) locus during B-cell activation. By regulating the methylation of histone H3 at 'Lys-36' and histone H4 at 'Lys-20' at the IgH locus, involved in TP53BP1 recruitment to the IgH switch region and promotes the transcription of IgA. In terms of biological role, histone methyltransferase which specifically dimethylates nucleosomal histone H3 at 'Lys-36' (H3K36me2). Histone methyltransferase which specifically dimethylates nucleosomal histone H3 at 'Lys-36' (H3K36me2). Methylation of histone H3 at 'Lys-27' is controversial. Mono-, di- or tri-methylates histone H3 at 'Lys-27' (H3K27me, H3K27me2 and H3K27me3). Does not methylate histone H3 at 'Lys-27'. May act as a transcription regulator that binds DNA and suppresses IL5 transcription through HDAC recruitment. The chain is Histone-lysine N-methyltransferase NSD2 from Homo sapiens (Human).